A 147-amino-acid chain; its full sequence is uncharacterized protein (147 aa).

Residues 23–48 form a disordered region; it reads EEVSQPEPNTANDSSTEYKGKSKDDF. The segment covering 28 to 37 has biased composition (polar residues); the sequence is PEPNTANDSS. The segment covering 38 to 48 has biased composition (basic and acidic residues); sequence TEYKGKSKDDF. The helical transmembrane segment at 85-105 threads the bilayer; it reads LMFCIIACSFICAIQFLFFII.

It localises to the membrane. This is an uncharacterized protein from Saccharomyces cerevisiae (strain ATCC 204508 / S288c) (Baker's yeast).